The primary structure comprises 345 residues: 4-hydroxy-3-methylbut-2-en-1-yl diphosphate synthase (flavodoxin) (345 aa).

4 residues coordinate [4Fe-4S] cluster: Cys271, Cys274, Cys306, and Glu313.

Belongs to the IspG family. It depends on [4Fe-4S] cluster as a cofactor.

The catalysed reaction is (2E)-4-hydroxy-3-methylbut-2-enyl diphosphate + oxidized [flavodoxin] + H2O + 2 H(+) = 2-C-methyl-D-erythritol 2,4-cyclic diphosphate + reduced [flavodoxin]. The protein operates within isoprenoid biosynthesis; isopentenyl diphosphate biosynthesis via DXP pathway; isopentenyl diphosphate from 1-deoxy-D-xylulose 5-phosphate: step 5/6. Its function is as follows. Converts 2C-methyl-D-erythritol 2,4-cyclodiphosphate (ME-2,4cPP) into 1-hydroxy-2-methyl-2-(E)-butenyl 4-diphosphate. The protein is 4-hydroxy-3-methylbut-2-en-1-yl diphosphate synthase (flavodoxin) of Haemophilus influenzae (strain PittEE).